The following is a 138-amino-acid chain: MRTLWIMAVCLIGVEGNFFQFAEMIVKMTGKEAVHSYAIYGCYCGWGGQGKPQDATDRCCFVHDCCYGTVNDCNPKMATYSYSFENGDIVCGDNNLCLKTVCECDRAAAICLGQNVNTYDKNYENYAISHCTEESEQC.

The N-terminal stretch at Met1 to Gly16 is a signal peptide. Intrachain disulfides connect Cys42/Cys131, Cys44/Cys60, Cys59/Cys111, Cys65/Cys138, Cys66/Cys104, Cys73/Cys97, and Cys91/Cys102. Ca(2+) is bound by residues Tyr43, Gly45, and Gly47. The active site involves His63. Asp64 contacts Ca(2+). Residue Asp105 is part of the active site.

Belongs to the phospholipase A2 family. Group II subfamily. D49 sub-subfamily. Heterodimer of A and B chain; non-covalently linked. The acidic protein (B chain) has phospholipase A2 activity and the A chain weakly inhibits the B chain enzymatic activity but potentiates its lethal potency. Requires Ca(2+) as cofactor. As to expression, expressed by the venom gland.

It is found in the secreted. It catalyses the reaction a 1,2-diacyl-sn-glycero-3-phosphocholine + H2O = a 1-acyl-sn-glycero-3-phosphocholine + a fatty acid + H(+). Its function is as follows. Heterodimer (A and B chains): phospholipase A2 that acts as a presynaptic neurotoxin and shows a PLA2 activity of 1377 umol/min/mg. In vivo, induces edema and produces neurotoxic symptoms in mice. Also exhibits indirect hemolysis, a strong myonecrotic activity and cytotoxicity. PLA2 catalyzes the calcium-dependent hydrolysis of the 2-acyl groups in 3-sn-phosphoglycerides. In terms of biological role, monomer: Snake venom phospholipase A2 (PLA2) that shows a PLA2 activity of 578 umol/min/mg. This chain is Acidic phospholipase A2 daboiatoxin A chain, found in Daboia siamensis (Eastern Russel's viper).